The chain runs to 107 residues: Large ribosomal subunit protein uL24 (107 aa).

This sequence belongs to the universal ribosomal protein uL24 family. As to quaternary structure, part of the 50S ribosomal subunit.

Its function is as follows. One of two assembly initiator proteins, it binds directly to the 5'-end of the 23S rRNA, where it nucleates assembly of the 50S subunit. In terms of biological role, one of the proteins that surrounds the polypeptide exit tunnel on the outside of the subunit. The protein is Large ribosomal subunit protein uL24 of Neisseria gonorrhoeae (strain ATCC 700825 / FA 1090).